The chain runs to 450 residues: Phosphoglucosamine mutase (450 aa).

Catalysis depends on serine 97, which acts as the Phosphoserine intermediate. Residues serine 97, aspartate 236, aspartate 238, and aspartate 240 each contribute to the Mg(2+) site. Serine 97 carries the phosphoserine modification.

This sequence belongs to the phosphohexose mutase family. The cofactor is Mg(2+). Post-translationally, activated by phosphorylation.

The catalysed reaction is alpha-D-glucosamine 1-phosphate = D-glucosamine 6-phosphate. Catalyzes the conversion of glucosamine-6-phosphate to glucosamine-1-phosphate. The polypeptide is Phosphoglucosamine mutase (Prochlorococcus marinus (strain MIT 9215)).